A 476-amino-acid chain; its full sequence is Replication factor C large subunit (476 aa).

ATP is bound at residue 50-57 (GPPGVGKT). The interval 447 to 476 (YEKGTKKGKGEKRRKGSDEGSGLLKWLKKD) is disordered. The span at 452 to 461 (KKGKGEKRRK) shows a compositional bias: basic residues.

It belongs to the activator 1 small subunits family. RfcL subfamily. Heteromultimer composed of small subunits (RfcS) and large subunits (RfcL).

In terms of biological role, part of the RFC clamp loader complex which loads the PCNA sliding clamp onto DNA. The polypeptide is Replication factor C large subunit (Ignicoccus hospitalis (strain KIN4/I / DSM 18386 / JCM 14125)).